We begin with the raw amino-acid sequence, 794 residues long: LPS-assembly protein LptD (794 aa).

A signal peptide spans 1-31; the sequence is MPSHCSSLLCARFRLSSLAVIVALAASGVRA.

Belongs to the LptD family. Component of the lipopolysaccharide transport and assembly complex. Interacts with LptE and LptA.

The protein localises to the cell outer membrane. Its function is as follows. Together with LptE, is involved in the assembly of lipopolysaccharide (LPS) at the surface of the outer membrane. The protein is LPS-assembly protein LptD of Marinobacter nauticus (strain ATCC 700491 / DSM 11845 / VT8) (Marinobacter aquaeolei).